The following is a 332-amino-acid chain: Isopentenyl phosphate kinase (332 aa).

Residue Met-1 is modified to N-acetylmethionine. 18–22 (KLGGA) is a binding site for ATP. Ala-96 serves as a coordination point for substrate. Gly-97 contacts ATP. Substrate contacts are provided by His-101 and Gly-202. Residues Asp-223, 228–233 (YDRPPS), Gly-279, and Lys-283 each bind ATP.

It belongs to the isopentenyl phosphate kinase family.

It localises to the cytoplasm. The protein resides in the cytosol. The enzyme catalyses isopentenyl phosphate + ATP = isopentenyl diphosphate + ADP. Functionally, catalyzes the formation of isopentenyl diphosphate (IPP), the universal five-carbon isoprenoid building block of all natural isoprenoids. Acts in parallel with the mevalonate (MVA) pathway and plays an important role in regulating the formation of both MVA and methylerythritol phosphate (MEP) pathway-derived terpenoid compounds by controlling the ratio of isopentenyl phosphate (IP) and dimethylallyl phosphate (DMAP) to isopentenyl diphosphate (IPP) and dimethylallyl diphosphate (DMAPP). Controls the levels of IP and DMAP that are competitive inhibitors of the farnesyl diphosphate synthase. Regulates the production of farnesyl diphosphate-derived terpenoids in the cytosol, and geranyl diphosphate-derived compounds in plastids. The protein is Isopentenyl phosphate kinase of Arabidopsis thaliana (Mouse-ear cress).